The following is a 337-amino-acid chain: Methionine import ATP-binding protein MetN (337 aa).

The 237-residue stretch at 4–240 folds into the ABC transporter domain; it reads IKNLEITYPG…PWHPITKEFV (237 aa). 37 to 44 contributes to the ATP binding site; it reads GLSGAGKS.

Belongs to the ABC transporter superfamily. Methionine importer (TC 3.A.1.24) family. In terms of assembly, the complex is composed of two ATP-binding proteins (MetN), two transmembrane proteins (MetI) and a solute-binding protein (MetQ).

The protein localises to the cell membrane. The enzyme catalyses L-methionine(out) + ATP + H2O = L-methionine(in) + ADP + phosphate + H(+). The catalysed reaction is D-methionine(out) + ATP + H2O = D-methionine(in) + ADP + phosphate + H(+). Its function is as follows. Part of the ABC transporter complex MetNIQ involved in methionine import. Responsible for energy coupling to the transport system. The sequence is that of Methionine import ATP-binding protein MetN from Carboxydothermus hydrogenoformans (strain ATCC BAA-161 / DSM 6008 / Z-2901).